Reading from the N-terminus, the 343-residue chain is 4-hydroxythreonine-4-phosphate dehydrogenase (343 aa).

Substrate is bound by residues H141 and T142. The a divalent metal cation site is built by H175, H220, and H275. Substrate is bound by residues K283, N292, and R301.

This sequence belongs to the PdxA family. In terms of assembly, homodimer. The cofactor is Zn(2+). Mg(2+) serves as cofactor. Requires Co(2+) as cofactor.

It is found in the cytoplasm. It catalyses the reaction 4-(phosphooxy)-L-threonine + NAD(+) = 3-amino-2-oxopropyl phosphate + CO2 + NADH. Its pathway is cofactor biosynthesis; pyridoxine 5'-phosphate biosynthesis; pyridoxine 5'-phosphate from D-erythrose 4-phosphate: step 4/5. Its function is as follows. Catalyzes the NAD(P)-dependent oxidation of 4-(phosphooxy)-L-threonine (HTP) into 2-amino-3-oxo-4-(phosphooxy)butyric acid which spontaneously decarboxylates to form 3-amino-2-oxopropyl phosphate (AHAP). In Janthinobacterium sp. (strain Marseille) (Minibacterium massiliensis), this protein is 4-hydroxythreonine-4-phosphate dehydrogenase.